The sequence spans 471 residues: RuvB-like protein 2 (471 aa).

75–82 (GPPSTGKT) provides a ligand contact to ATP.

The protein belongs to the RuvB family. In terms of assembly, probably forms a homohexamer. Interacts with RVB1 and may form heterododecamers with RVB1. Component of the SWR1 chromatin remodeling complex composed of at least ACT1, ARP4, RVB1, RVB2, ARP6, YAF9, VPS71, VPS72, SWC3, SWC4, SWC5, SWC7 and SWR1, and perhaps BDF1. Component of the chromatin-remodeling INO80 complex, at least composed of ARP4, ARP5, ARP8, RVB1, RVB2, TAF14, NHP10, IES1, IES3, IES4, IES6, ACT1, IES2, IES5 and INO80. Also belongs to the R2TP complex composed of at least RVB1, RVB2, TAH1 and PIH1. Interacts with SPT15/TBP.

The protein resides in the nucleus. It is found in the nucleoplasm. The catalysed reaction is ATP + H2O = ADP + phosphate + H(+). In terms of biological role, DNA helicase which participates in several chromatin remodeling complexes, including the SWR1 and the INO80 complexes. The SWR1 complex mediates the ATP-dependent exchange of histone H2A for the H2A variant HZT1 leading to transcriptional regulation of selected genes by chromatin remodeling. The INO80 complex remodels chromatin by shifting nucleosomes. Its ability to induce transcription of some phosphate-responsive genes is modulated by inositol polyphosphates. The INO80 complex is involved in DNA repair by associating to 'Ser-129' phosphorylated H2A histones as a response to DNA damage. During transcription may recruit SPT15/TBP to the TATA-boxes of involved genes. Required for box C/D and box H/ACA snoRNA accumulation and involved in pre-rRNA processing. The polypeptide is RuvB-like protein 2 (RVB2) (Saccharomyces cerevisiae (strain ATCC 204508 / S288c) (Baker's yeast)).